Here is a 202-residue protein sequence, read N- to C-terminus: ATP-dependent Clp protease proteolytic subunit (202 aa).

Ser106 serves as the catalytic Nucleophile. Residue His131 is part of the active site.

It belongs to the peptidase S14 family. As to quaternary structure, fourteen ClpP subunits assemble into 2 heptameric rings which stack back to back to give a disk-like structure with a central cavity, resembling the structure of eukaryotic proteasomes.

Its subcellular location is the cytoplasm. The catalysed reaction is Hydrolysis of proteins to small peptides in the presence of ATP and magnesium. alpha-casein is the usual test substrate. In the absence of ATP, only oligopeptides shorter than five residues are hydrolyzed (such as succinyl-Leu-Tyr-|-NHMec, and Leu-Tyr-Leu-|-Tyr-Trp, in which cleavage of the -Tyr-|-Leu- and -Tyr-|-Trp bonds also occurs).. Its function is as follows. Cleaves peptides in various proteins in a process that requires ATP hydrolysis. Has a chymotrypsin-like activity. Plays a major role in the degradation of misfolded proteins. The sequence is that of ATP-dependent Clp protease proteolytic subunit from Albidiferax ferrireducens (strain ATCC BAA-621 / DSM 15236 / T118) (Rhodoferax ferrireducens).